Consider the following 1568-residue polypeptide: Agglutinin-like protein 7 (1568 aa).

The first 18 residues, 1–18 (MKKLYLLYLLASFTTVIS), serve as a signal peptide directing secretion. Intrachain disulfides connect cysteine 74/cysteine 151, cysteine 97/cysteine 113, cysteine 206/cysteine 299, and cysteine 228/cysteine 257. ALS repeat units follow at residues 403–434 (TTLT…VKIP), 441–471 (ITTQ…IKEP), 476–507 (VTTT…IKEP), and 512–543 (VTTT…IHDP). 3 disordered regions span residues 546-662 (ESSS…SSSS), 721-743 (LSSD…FPHT), and 767-832 (VSLT…SIPT). Composition is skewed to low complexity over residues 547-662 (SSSS…SSSS), 721-738 (LSSD…SPSD), 768-793 (SLTS…SPST), and 801-824 (SSSF…ILSE). An N-linked (GlcNAc...) asparagine glycan is attached at asparagine 559. N-linked (GlcNAc...) asparagine glycosylation occurs at asparagine 851. Disordered regions lie at residues 860 to 1030 (VVSS…VASE) and 1046 to 1097 (EVVS…ENSD). Low complexity predominate over residues 872-904 (ESSVSVTSESSESVTSESVASESVTSESVTAVS). Residues 909-918 (LYTTSEEVST) show a composition bias toward polar residues. Residues 919–945 (SDSNSGMSSPIPSSEQRSSIPIMSSSD) show a composition bias toward low complexity. Residues 956 to 992 (GTILSEESSDSIPTTFSTRYWSPSGMSSRHYTNSTET) are compositionally biased toward polar residues. Asparagine 988 carries N-linked (GlcNAc...) asparagine glycosylation. Composition is skewed to low complexity over residues 993-1002 (SVSDVVSSSV) and 1009-1030 (ESSV…VASE). The span at 1046–1062 (EVVSTSDSKIVPSTSVP) shows a compositional bias: polar residues. Positions 1063 to 1077 (SSEQRSSIPIMSSSD) are enriched in low complexity. N-linked (GlcNAc...) asparagine glycosylation occurs at asparagine 1188. 2 disordered regions span residues 1194–1220 (LGMS…EIEL) and 1271–1305 (GLSD…ESLG). 2 stretches are compositionally biased toward polar residues: residues 1272 to 1286 (LSDS…SNRS) and 1294 to 1303 (DNTISISRES). Residue asparagine 1284 is glycosylated (N-linked (GlcNAc...) asparagine). Residue serine 1548 is the site of GPI-anchor amidated serine attachment. Residues 1549–1568 (GSVSKYSLWMMAFYMLFGLF) constitute a propeptide, removed in mature form.

Belongs to the ALS family. Post-translationally, the GPI-anchor is attached to the protein in the endoplasmic reticulum and serves to target the protein to the cell surface. There, the glucosamine-inositol phospholipid moiety is cleaved off and the GPI-modified mannoprotein is covalently attached via its lipidless GPI glycan remnant to the 1,6-beta-glucan of the outer cell wall layer.

The protein resides in the cell membrane. It is found in the secreted. Its subcellular location is the cell wall. Its function is as follows. Cell surface adhesion protein which mediates both yeast-to-host tissue adherence and yeast aggregation. Plays an important role in the pathogenesis of C.albicans infections. The chain is Agglutinin-like protein 7 (ALS7) from Candida albicans (strain SC5314 / ATCC MYA-2876) (Yeast).